A 384-amino-acid chain; its full sequence is NAD(P) transhydrogenase subunit alpha part 1 (384 aa).

Residues proline 126–isoleucine 136 are RQD loop; involved in interaction with PntB. Residues arginine 127–serine 129, glutamine 132–aspartate 135, valine 180–valine 182, aspartate 202–arginine 204, glycine 234, glutamine 247, and leucine 266 contribute to the NAD(+) site.

This sequence belongs to the AlaDH/PNT family. As to quaternary structure, heterotrimer of two alpha chains and a beta (PntB) chain; in Rhodospirillum, the alpha chain is made of two subunits (PntAA and PntAB) and forms a dimer.

It carries out the reaction NAD(+) + NADPH + H(+)(in) = NADH + NADP(+) + H(+)(out). In terms of biological role, the transhydrogenation between NADH and NADP is coupled to respiration and ATP hydrolysis and functions as a proton pump across the membrane. The sequence is that of NAD(P) transhydrogenase subunit alpha part 1 (pntAA) from Rhodospirillum rubrum (strain ATCC 11170 / ATH 1.1.1 / DSM 467 / LMG 4362 / NCIMB 8255 / S1).